The chain runs to 184 residues: Tumor necrosis factor alpha-induced protein 8-like protein 2 (184 aa).

Belongs to the TNFAIP8 family. TNFAIP8L2 subfamily. As to quaternary structure, may interact with CASP8; however, such result is unclear since could not reproduce the interaction with CASP8. Interacts with RAC1. Ubiquitinated in a BTRC-depdent manner; leading to degradation mediated through the proteasome pathway.

The protein resides in the cytoplasm. The protein localises to the nucleus. Its subcellular location is the lysosome. Acts as a negative regulator of innate and adaptive immunity by maintaining immune homeostasis. Plays a regulatory role in the Toll-like signaling pathway by determining the strength of LPS-induced signaling and gene expression. Inhibits TCR-mediated T-cell activation and negatively regulate T-cell function to prevent hyperresponsiveness. Also inhibits autolysosome formation via negatively modulating MTOR activation by interacting with RAC1 and promoting the disassociation of the RAC1-MTOR complex. Plays an essential role in NK-cell biology by acting as a checkpoint and displaying an expression pattern correlating with NK-cell maturation process and by negatively regulating NK-cell maturation and antitumor immunity. Mechanistically, suppresses IL-15-triggered mTOR activity in NK-cells. The sequence is that of Tumor necrosis factor alpha-induced protein 8-like protein 2 (TNFAIP8L2) from Rhinolophus ferrumequinum (Greater horseshoe bat).